Here is a 176-residue protein sequence, read N- to C-terminus: Nucleoside triphosphate/diphosphate phosphatase (176 aa).

Residue arginine 23 is the Proton donor of the active site. The Mg(2+) site is built by asparagine 87, aspartate 103, aspartate 105, aspartate 107, aspartate 120, and glutamate 123.

This sequence belongs to the Ntdp family. Mg(2+) is required as a cofactor.

It carries out the reaction a ribonucleoside 5'-triphosphate + H2O = a ribonucleoside 5'-diphosphate + phosphate + H(+). It catalyses the reaction a ribonucleoside 5'-diphosphate + H2O = a ribonucleoside 5'-phosphate + phosphate + H(+). Has nucleoside phosphatase activity towards nucleoside triphosphates and nucleoside diphosphates. This is Nucleoside triphosphate/diphosphate phosphatase from Bacillus velezensis (strain DSM 23117 / BGSC 10A6 / LMG 26770 / FZB42) (Bacillus amyloliquefaciens subsp. plantarum).